The following is a 308-amino-acid chain: Mycothiol acetyltransferase (308 aa).

The tract at residues 1-20 (MTSDDTAQPSGARRIETRPD) is disordered. 2 consecutive N-acetyltransferase domains span residues 15–152 (IETR…RSLT) and 165–308 (VTVR…RSET). Residue glutamate 47 coordinates 1D-myo-inositol 2-(L-cysteinylamino)-2-deoxy-alpha-D-glucopyranoside. Residue 91-93 (LVV) participates in acetyl-CoA binding. 1D-myo-inositol 2-(L-cysteinylamino)-2-deoxy-alpha-D-glucopyranoside-binding residues include glutamate 192, lysine 231, and glutamate 240. Acetyl-CoA contacts are provided by residues 244-246 (VGV) and 251-257 (QGGGLGK). Tyrosine 278 contacts 1D-myo-inositol 2-(L-cysteinylamino)-2-deoxy-alpha-D-glucopyranoside.

It belongs to the acetyltransferase family. MshD subfamily. As to quaternary structure, monomer.

The enzyme catalyses 1D-myo-inositol 2-(L-cysteinylamino)-2-deoxy-alpha-D-glucopyranoside + acetyl-CoA = mycothiol + CoA + H(+). Its function is as follows. Catalyzes the transfer of acetyl from acetyl-CoA to desacetylmycothiol (Cys-GlcN-Ins) to form mycothiol. This chain is Mycothiol acetyltransferase, found in Streptomyces scabiei (strain 87.22).